The following is a 556-amino-acid chain: Dihydroxy-acid dehydratase (556 aa).

Position 47 (Cys-47) interacts with [2Fe-2S] cluster. Mg(2+) is bound at residue Asp-79. Cys-120 contacts [2Fe-2S] cluster. Positions 121 and 122 each coordinate Mg(2+). N6-carboxylysine is present on Lys-122. [2Fe-2S] cluster is bound at residue Cys-192. Glu-444 is a binding site for Mg(2+). Catalysis depends on Ser-470, which acts as the Proton acceptor.

Belongs to the IlvD/Edd family. As to quaternary structure, homodimer. [2Fe-2S] cluster is required as a cofactor. The cofactor is Mg(2+).

The enzyme catalyses (2R)-2,3-dihydroxy-3-methylbutanoate = 3-methyl-2-oxobutanoate + H2O. It catalyses the reaction (2R,3R)-2,3-dihydroxy-3-methylpentanoate = (S)-3-methyl-2-oxopentanoate + H2O. It participates in amino-acid biosynthesis; L-isoleucine biosynthesis; L-isoleucine from 2-oxobutanoate: step 3/4. Its pathway is amino-acid biosynthesis; L-valine biosynthesis; L-valine from pyruvate: step 3/4. Its function is as follows. Functions in the biosynthesis of branched-chain amino acids. Catalyzes the dehydration of (2R,3R)-2,3-dihydroxy-3-methylpentanoate (2,3-dihydroxy-3-methylvalerate) into 2-oxo-3-methylpentanoate (2-oxo-3-methylvalerate) and of (2R)-2,3-dihydroxy-3-methylbutanoate (2,3-dihydroxyisovalerate) into 2-oxo-3-methylbutanoate (2-oxoisovalerate), the penultimate precursor to L-isoleucine and L-valine, respectively. This Prochlorococcus marinus (strain MIT 9303) protein is Dihydroxy-acid dehydratase.